Consider the following 396-residue polypeptide: Elongation factor Tu 2 (396 aa).

A tr-type G domain is found at 10 to 206; sequence KPHVNVGTIG…ALDTYIPTPE (197 aa). The segment at 19-26 is G1; the sequence is GHVDHGKT. 19–26 provides a ligand contact to GTP; sequence GHVDHGKT. Thr26 contributes to the Mg(2+) binding site. The tract at residues 60-64 is G2; that stretch reads GITIN. A G3 region spans residues 81–84; it reads DCPG. Residues 81–85 and 136–139 each bind GTP; these read DCPGH and NKCD. The G4 stretch occupies residues 136–139; it reads NKCD. Residues 174–176 form a G5 region; that stretch reads SAK.

Belongs to the TRAFAC class translation factor GTPase superfamily. Classic translation factor GTPase family. EF-Tu/EF-1A subfamily. Monomer.

Its subcellular location is the cytoplasm. It carries out the reaction GTP + H2O = GDP + phosphate + H(+). GTP hydrolase that promotes the GTP-dependent binding of aminoacyl-tRNA to the A-site of ribosomes during protein biosynthesis. This is Elongation factor Tu 2 from Acidovorax sp. (strain JS42).